A 65-amino-acid chain; its full sequence is Metallothionein-3 (65 aa).

At M1 the chain carries N-acetylmethionine. The tract at residues 1–30 (MDPEACPCPTGGSCTCSDSCKCEGCTCASS) is beta. Residues C6, C8, C14, C16, C20, C22, C25, and C27 each contribute to the a divalent metal cation site. The segment at 31–65 (KKSCCPAECEKCAKDCVCKGGEGAEAEEKKCGCCQ) is alpha. Phosphoserine is present on S33. 9 residues coordinate a divalent metal cation: C34, C35, C39, C42, C46, C48, C61, C63, and C64.

It belongs to the metallothionein superfamily. Type 1 family.

Its function is as follows. Binds heavy metals. Contains five zinc and one copper atoms per polypeptide chain and only a negligible amount of cadmium. The sequence is that of Metallothionein-3 (MT3) from Ovis aries (Sheep).